A 913-amino-acid chain; its full sequence is Vacuolar membrane protease (913 aa).

The Cytoplasmic segment spans residues 1–15 (MMANYFRSTFKFRKT). Residues 16–36 (TVSTLFVLTVLVISILTWFDA) traverse the membrane as a helical segment. The Vacuolar segment spans residues 37–364 (NKYKSNLPDD…FFVVSARQLY (328 aa)). An N-linked (GlcNAc...) asparagine glycan is attached at asparagine 117. Zn(2+) contacts are provided by histidine 152 and aspartate 164. The Proton acceptor role is filled by glutamate 196. 3 residues coordinate Zn(2+): glutamate 197, glutamate 222, and histidine 296. Residues 365-385 (VWNIVLLCVLPITLILLRIVC) traverse the membrane as a helical segment. Topologically, residues 386–394 (NKLGTWRMP) are cytoplasmic. Residues 395 to 415 (TSALFTRIPFALFVSSFTIYF) traverse the membrane as a helical segment. The Vacuolar portion of the chain corresponds to 416–431 (TKELLLQLNPTIWSRN). The chain crosses the membrane as a helical span at residues 432–452 (FILPFLFCISEFLLINTLVLA). Residues 453–465 (LFEYLWPIQDFKT) lie on the Cytoplasmic side of the membrane. Residues 466 to 486 (LSLLELSAIAWLFLLKCTWDL) traverse the membrane as a helical segment. Over 487-494 (SSSGFKAT) the chain is Vacuolar. The helical transmembrane segment at 495–515 (GVYPVTVFYLFISLASMFGLC) threads the bilayer. At 516-600 (SMCFGKRPNA…TLNYDWSAQY (85 aa)) the chain is on the cytoplasmic side. The segment covering 540-552 (NDTHSIECPRQPE) has biased composition (basic and acidic residues). A disordered region spans residues 540–578 (NDTHSIECPRQPEDSETTETSPLINTPSSSVQSSPIASS). The segment covering 557–566 (TETSPLINTP) has biased composition (polar residues). Over residues 567-578 (SSSVQSSPIASS) the composition is skewed to low complexity. A helical membrane pass occupies residues 601 to 621 (LLAVPINAFLIWESLFNLFDA). The Vacuolar portion of the chain corresponds to 622-634 (LSMTVQESNKATE). The chain crosses the membrane as a helical span at residues 635 to 655 (AVFKFAIYGAIFLCSPLLPFT). Residues 656–660 (TKLNR) are Cytoplasmic-facing. A helical membrane pass occupies residues 661-681 (FVVIILGVVTILAASFSLFAA). Residues 682 to 913 (PYTELAPLKL…MVTIHKYLEL (232 aa)) lie on the Vacuolar side of the membrane. N-linked (GlcNAc...) asparagine glycosylation is found at asparagine 729, asparagine 794, and asparagine 810.

The protein belongs to the peptidase M28 family. Zn(2+) is required as a cofactor.

The protein resides in the vacuole membrane. In terms of biological role, may be involved in vacuolar sorting and osmoregulation. The polypeptide is Vacuolar membrane protease (Kluyveromyces lactis (strain ATCC 8585 / CBS 2359 / DSM 70799 / NBRC 1267 / NRRL Y-1140 / WM37) (Yeast)).